A 432-amino-acid polypeptide reads, in one-letter code: Homogentisate 1,2-dioxygenase (432 aa).

Catalysis depends on histidine 286, which acts as the Proton acceptor. Fe cation is bound by residues histidine 329 and glutamate 335. Residues tyrosine 344 and histidine 365 each contribute to the homogentisate site. Histidine 365 contributes to the Fe cation binding site.

This sequence belongs to the homogentisate dioxygenase family. Hexamer; dimer of trimers. It depends on Fe cation as a cofactor.

The catalysed reaction is homogentisate + O2 = 4-maleylacetoacetate + H(+). The protein operates within amino-acid degradation; L-phenylalanine degradation; acetoacetate and fumarate from L-phenylalanine: step 4/6. Functionally, involved in the catabolism of homogentisate (2,5-dihydroxyphenylacetate or 2,5-OH-PhAc), a central intermediate in the degradation of phenylalanine and tyrosine. Catalyzes the oxidative ring cleavage of the aromatic ring of homogentisate to yield maleylacetoacetate. The polypeptide is Homogentisate 1,2-dioxygenase (Bordetella petrii (strain ATCC BAA-461 / DSM 12804 / CCUG 43448)).